The following is a 430-amino-acid chain: Adenylosuccinate synthetase (430 aa).

GTP is bound by residues 13–19 and 41–43; these read GDEGKGK and GHT. Asp14 acts as the Proton acceptor in catalysis. Positions 14 and 41 each coordinate Mg(2+). IMP is bound by residues 14-17, 39-42, Thr130, Arg144, Gln225, Thr240, and Arg304; these read DEGK and NAGH. His42 serves as the catalytic Proton donor. A substrate-binding site is contributed by 300 to 306; the sequence is STTGRAR. Residues Arg306, 332–334, and 414–416 contribute to the GTP site; these read KLD and STG.

The protein belongs to the adenylosuccinate synthetase family. As to quaternary structure, homodimer. Mg(2+) is required as a cofactor.

The protein localises to the cytoplasm. The enzyme catalyses IMP + L-aspartate + GTP = N(6)-(1,2-dicarboxyethyl)-AMP + GDP + phosphate + 2 H(+). The protein operates within purine metabolism; AMP biosynthesis via de novo pathway; AMP from IMP: step 1/2. In terms of biological role, plays an important role in the de novo pathway of purine nucleotide biosynthesis. Catalyzes the first committed step in the biosynthesis of AMP from IMP. The polypeptide is Adenylosuccinate synthetase (Alcanivorax borkumensis (strain ATCC 700651 / DSM 11573 / NCIMB 13689 / SK2)).